The primary structure comprises 169 residues: Peptide deformylase (169 aa).

Residues C91 and H133 each contribute to the Fe cation site. The active site involves E134. H137 is a Fe cation binding site.

Belongs to the polypeptide deformylase family. The cofactor is Fe(2+).

It catalyses the reaction N-terminal N-formyl-L-methionyl-[peptide] + H2O = N-terminal L-methionyl-[peptide] + formate. In terms of biological role, removes the formyl group from the N-terminal Met of newly synthesized proteins. Requires at least a dipeptide for an efficient rate of reaction. N-terminal L-methionine is a prerequisite for activity but the enzyme has broad specificity at other positions. This chain is Peptide deformylase, found in Salmonella typhi.